Consider the following 220-residue polypeptide: Ras-related protein Rab-3A (220 aa).

11 residues coordinate GTP: S31, S32, V33, G34, K35, T36, S37, T48, P49, S53, and T54. A Mg(2+)-binding site is contributed by T36. Positions 49 to 58 (PAFVSTVGID) match the Switch 1 motif. The Mg(2+) site is built by T54 and D77. G80 contacts GTP. The short motif at 80–96 (GQERYRTITTAYYRGAM) is the Switch 2 element. T86 is modified (phosphothreonine). Residues N135, K136, D138, A166, and K167 each contribute to the GTP site. Phosphoserine is present on residues S188 and S190. The tract at residues 194 to 220 (ADPAVTGAKQGPQLTDQQAPPHQDCAC) is disordered. S-geranylgeranyl cysteine attachment occurs at residues C218 and C220. A Cysteine methyl ester modification is found at C220.

Belongs to the small GTPase superfamily. Rab family. As to quaternary structure, interacts with RIMS1 and RIMS2. Interacts with Rabphilin-3A/RPH3A and Rab effector Noc2/RPH3AL. Interacts with SYTL4. Interacts with RAB3IP. Interacts with SGSM1 and SGSM3. Interacts with SYT1. Interacts with MYH9; this interaction is essential for lysosome exocytosis and plasma membrane repair. Interacts with STXBP1; this interaction promotes RAB3A dissociation from the vesicle membrane. Interacts with SNCA. Interacts with GDI1, GDI2, CHM and CHML; phosphorylation at Thr-86 disrupts these interactions. Interacts with MADD (via uDENN domain); the GTP-bound form is preferred for interaction. The cofactor is Mg(2+). In terms of processing, phosphorylation of Thr-86 in the switch II region by LRRK2 prevents the association of RAB regulatory proteins, including CHM, CHML and RAB GDP dissociation inhibitors GDI1 and GDI2. As to expression, specifically expressed in brain.

It localises to the cytoplasm. The protein resides in the cytosol. Its subcellular location is the lysosome. The protein localises to the cytoplasmic vesicle. It is found in the secretory vesicle. It localises to the cell projection. The protein resides in the axon. Its subcellular location is the cell membrane. The protein localises to the presynapse. It is found in the postsynapse. It carries out the reaction GTP + H2O = GDP + phosphate + H(+). With respect to regulation, regulated by guanine nucleotide exchange factors (GEFs) including RAB3IL1 and MADD which promote the exchange of bound GDP for free GTP. Regulated by GTPase activating proteins (GAPs) including RAB3GAP1 and TBC1D10B which increase the GTP hydrolysis activity. Inhibited by GDP dissociation inhibitors (GDIs) which prevent Rab-GDP dissociation. The small GTPases Rab are key regulators of intracellular membrane trafficking, from the formation of transport vesicles to their fusion with membranes. Rabs cycle between an inactive GDP-bound form and an active GTP-bound form that is able to recruit to membranes different sets of downstream effectors directly responsible for vesicle formation, movement, tethering and fusion. RAB3A plays a central role in regulated exocytosis and secretion. Controls the recruitment, tethering and docking of secretory vesicles to the plasma membrane. Upon stimulation, switches to its active GTP-bound form, cycles to vesicles and recruits effectors such as RIMS1, RIMS2, Rabphilin-3A/RPH3A, RPH3AL or SYTL4 to help the docking of vesicules onto the plasma membrane. Upon GTP hydrolysis by GTPase-activating protein, dissociates from the vesicle membrane allowing the exocytosis to proceed. Stimulates insulin secretion through interaction with RIMS2 or RPH3AL effectors in pancreatic beta cells. Regulates calcium-dependent lysosome exocytosis and plasma membrane repair (PMR) via the interaction with 2 effectors, SYTL4 and myosin-9/MYH9. Acts as a positive regulator of acrosome content secretion in sperm cells by interacting with RIMS1. Also plays a role in the regulation of dopamine release by interacting with synaptotagmin I/SYT. This Bos taurus (Bovine) protein is Ras-related protein Rab-3A (RAB3A).